Here is a 328-residue protein sequence, read N- to C-terminus: Peroxidase 59 (328 aa).

Residues Met-1–Ala-28 form the signal peptide. Gln-29 is subject to Pyrrolidone carboxylic acid. Cystine bridges form between Cys-39-Cys-116, Cys-72-Cys-77, Cys-122-Cys-323, and Cys-200-Cys-232. His-70 (proton acceptor) is an active-site residue. Residues Asp-71, Val-74, Gly-76, Asp-78, and Ser-80 each contribute to the Ca(2+) site. Substrate is bound at residue Pro-163. An N-linked (GlcNAc...) asparagine glycan is attached at Asn-182. Residue His-193 coordinates heme b. Thr-194 contributes to the Ca(2+) binding site. Asn-209 and Asn-239 each carry an N-linked (GlcNAc...) asparagine glycan. The Ca(2+) site is built by Asp-245, Thr-248, Thr-251, and Asp-253. N-linked (GlcNAc...) asparagine glycans are attached at residues Asn-281 and Asn-310.

This sequence belongs to the peroxidase family. Classical plant (class III) peroxidase subfamily. It depends on heme b as a cofactor. Ca(2+) is required as a cofactor. As to expression, slightly expressed in roots.

The protein localises to the secreted. It carries out the reaction 2 a phenolic donor + H2O2 = 2 a phenolic radical donor + 2 H2O. Removal of H(2)O(2), oxidation of toxic reductants, biosynthesis and degradation of lignin, suberization, auxin catabolism, response to environmental stresses such as wounding, pathogen attack and oxidative stress. These functions might be dependent on each isozyme/isoform in each plant tissue. This is Peroxidase 59 (PER59) from Arabidopsis thaliana (Mouse-ear cress).